Here is a 183-residue protein sequence, read N- to C-terminus: Peptidyl-tRNA hydrolase (183 aa).

A tRNA-binding site is contributed by Tyr14. His19 functions as the Proton acceptor in the catalytic mechanism. TRNA contacts are provided by Tyr60 and Asn62.

The protein belongs to the PTH family. In terms of assembly, monomer.

Its subcellular location is the cytoplasm. It catalyses the reaction an N-acyl-L-alpha-aminoacyl-tRNA + H2O = an N-acyl-L-amino acid + a tRNA + H(+). Functionally, hydrolyzes ribosome-free peptidyl-tRNAs (with 1 or more amino acids incorporated), which drop off the ribosome during protein synthesis, or as a result of ribosome stalling. In terms of biological role, catalyzes the release of premature peptidyl moieties from peptidyl-tRNA molecules trapped in stalled 50S ribosomal subunits, and thus maintains levels of free tRNAs and 50S ribosomes. In Mycoplasmoides gallisepticum (strain R(low / passage 15 / clone 2)) (Mycoplasma gallisepticum), this protein is Peptidyl-tRNA hydrolase.